A 371-amino-acid chain; its full sequence is Probable beta-1,3-galactosyltransferase 12 (371 aa).

Positions 1 to 36 (MPLFSHRFTTASSSSPASPSYYNKPSSKTHKPNSSS) are disordered. Over residues 11-36 (ASSSSPASPSYYNKPSSKTHKPNSSS) the composition is skewed to low complexity. Residues 46 to 66 (VAIIFFSLVSVFIGVAGTIFA) traverse the membrane as a helical; Signal-anchor for type II membrane protein segment. N-linked (GlcNAc...) asparagine glycosylation is present at Asn-291.

It belongs to the glycosyltransferase 31 family. The cofactor is Mn(2+).

The protein resides in the golgi apparatus membrane. The protein operates within protein modification; protein glycosylation. Beta-1,3-galactosyltransferase that transfers galactose from UDP-galactose to substrates with a terminal glycosyl residue. In Arabidopsis thaliana (Mouse-ear cress), this protein is Probable beta-1,3-galactosyltransferase 12 (B3GALT12).